We begin with the raw amino-acid sequence, 656 residues long: Nuclear elongation and deformation protein 1 (656 aa).

2 positions are modified to phosphoserine: serine 99 and serine 103. The span at 99-118 (SPIVSPTTSPKQTPSINVTE) shows a compositional bias: polar residues. Residues 99 to 121 (SPIVSPTTSPKQTPSINVTEPQD) form a disordered region. Threonine 106 is modified (phosphothreonine). Phosphoserine is present on residues serine 107, serine 159, and serine 286. Disordered regions lie at residues 282–328 (VYGH…VSES) and 587–656 (SDEE…ENAV). Residues 291–300 (PSRTPASPKS) are compositionally biased toward low complexity. 3 positions are modified to phosphoserine: serine 318, serine 321, and serine 587. Residues 318–328 (SEQSLSPVSES) show a composition bias toward polar residues. The span at 596–609 (KSTSKSPKTPKNTK) shows a compositional bias: low complexity. Acidic residues predominate over residues 640 to 656 (FEGEEDEEGEEDVENAV).

Belongs to the lipin family. In terms of assembly, interacts with dis3, pim1 and nup189.

Its function is as follows. May have a role in the maintenance of the nuclear envelope structure and in minichromosome stability. In Schizosaccharomyces pombe (strain 972 / ATCC 24843) (Fission yeast), this protein is Nuclear elongation and deformation protein 1 (ned1).